A 183-amino-acid polypeptide reads, in one-letter code: MESTLNTTARIGSWSSFISPPLQVCESFKWKLPKATRRVVSVADRQNSNFRWRKVTTGRANVAAEAAARVPTSVPVRVARELAQAGYKHLDVRTPDEFSIGHPSRAINVPYMYRVGSGMVKNPSFLRQVSSHFRKHDEIIIGCESGERSLMASTELLTAGFTGVTDIAGGYVPWTENELPVEE.

Residues 83–183 (AQAGYKHLDV…WTENELPVEE (101 aa)) form the Rhodanese domain.

Functionally, is thought to act during the early stages of leaf senescence. The polypeptide is Senescence-associated protein DIN1 (DIN1) (Raphanus sativus (Radish)).